The chain runs to 1615 residues: DNA-directed RNA polymerase I subunit rpa1 (1615 aa).

4 residues coordinate Zn(2+): Cys65, Cys68, Cys75, and His78. The tract at residues 155–181 (GKSNEEGEEVMESDESDSDKMDTDENK) is disordered. Over residues 160–171 (EGEEVMESDESD) the composition is skewed to acidic residues. Over residues 172–181 (SDKMDTDENK) the composition is skewed to basic and acidic residues. Residues Asp593, Asp595, and Asp597 each contribute to the Mg(2+) site. Residues 955–967 (PQDYFFHCMAGRE) form a bridging helix region. The segment covering 1305-1316 (DSLTINDDDAPA) has biased composition (acidic residues). Positions 1305 to 1411 (DSLTINDDDA…NSRSSNSFSD (107 aa)) are disordered. Low complexity predominate over residues 1317–1336 (NDDTTNNDENTSQQQPSSQN). Residues 1366-1399 (EDGEEEAEEKDSDEGESEAEESDDKSDVDSDSDE) show a composition bias toward acidic residues. A compositionally biased stretch (low complexity) spans 1400–1411 (ISNSRSSNSFSD).

The protein belongs to the RNA polymerase beta' chain family. As to quaternary structure, component of the RNA polymerase I (Pol I) complex consisting of at least 13 subunits.

It localises to the nucleus. It carries out the reaction RNA(n) + a ribonucleoside 5'-triphosphate = RNA(n+1) + diphosphate. In terms of biological role, DNA-dependent RNA polymerase catalyzes the transcription of DNA into RNA using the four ribonucleoside triphosphates as substrates. Largest and catalytic core component of RNA polymerase I which synthesizes ribosomal RNA precursors. Forms the polymerase active center together with the second largest subunit. A single stranded DNA template strand of the promoter is positioned within the central active site cleft of Pol I. A bridging helix emanates from RPA1 and crosses the cleft near the catalytic site and is thought to promote translocation of Pol I by acting as a ratchet that moves the RNA-DNA hybrid through the active site by switching from straight to bent conformations at each step of nucleotide addition. The polypeptide is DNA-directed RNA polymerase I subunit rpa1 (polr1a) (Dictyostelium discoideum (Social amoeba)).